A 28-amino-acid polypeptide reads, in one-letter code: fur leader peptide (28 aa).

Cotranscribed with fur, it is essential for fur translation. The fur ribosomal binding site (RBS) is occluded by the 5'-mRNA secondary structure, which is opened by uof translation. In Escherichia coli (strain K12), this protein is fur leader peptide (uof).